Reading from the N-terminus, the 466-residue chain is 3-isopropylmalate dehydratase large subunit (466 aa).

[4Fe-4S] cluster is bound by residues cysteine 347, cysteine 407, and cysteine 410.

It belongs to the aconitase/IPM isomerase family. LeuC type 1 subfamily. In terms of assembly, heterodimer of LeuC and LeuD. Requires [4Fe-4S] cluster as cofactor.

It catalyses the reaction (2R,3S)-3-isopropylmalate = (2S)-2-isopropylmalate. The protein operates within amino-acid biosynthesis; L-leucine biosynthesis; L-leucine from 3-methyl-2-oxobutanoate: step 2/4. Its function is as follows. Catalyzes the isomerization between 2-isopropylmalate and 3-isopropylmalate, via the formation of 2-isopropylmaleate. The protein is 3-isopropylmalate dehydratase large subunit of Blochmanniella pennsylvanica (strain BPEN).